Reading from the N-terminus, the 270-residue chain is Elongation factor Ts (270 aa).

The interval 77 to 80 (TDFV) is involved in Mg(2+) ion dislocation from EF-Tu.

It belongs to the EF-Ts family.

The protein resides in the cytoplasm. Associates with the EF-Tu.GDP complex and induces the exchange of GDP to GTP. It remains bound to the aminoacyl-tRNA.EF-Tu.GTP complex up to the GTP hydrolysis stage on the ribosome. In Nocardioides sp. (strain ATCC BAA-499 / JS614), this protein is Elongation factor Ts.